The sequence spans 254 residues: 5-oxoprolinase subunit A (254 aa).

It belongs to the LamB/PxpA family. In terms of assembly, forms a complex composed of PxpA, PxpB and PxpC.

It carries out the reaction 5-oxo-L-proline + ATP + 2 H2O = L-glutamate + ADP + phosphate + H(+). In terms of biological role, catalyzes the cleavage of 5-oxoproline to form L-glutamate coupled to the hydrolysis of ATP to ADP and inorganic phosphate. In Carboxydothermus hydrogenoformans (strain ATCC BAA-161 / DSM 6008 / Z-2901), this protein is 5-oxoprolinase subunit A.